The following is a 279-amino-acid chain: Undecaprenyl-diphosphatase (279 aa).

Transmembrane regions (helical) follow at residues 45–65, 85–105, 113–133, 188–208, 226–246, and 255–275; these read FVEMFNIVIQLGAIMAVIVIY, WQLWLKVVIACIPSILIALPF, FNFMIPIAIALIFYGFVFIWV, SVAADFTFFLAIPTMFGYSGL, LILLVASLTAFVVSLYVIRFL, and FTIFGKYRIVLGSLLILYWLV.

The protein belongs to the UppP family.

It localises to the cell membrane. The catalysed reaction is di-trans,octa-cis-undecaprenyl diphosphate + H2O = di-trans,octa-cis-undecaprenyl phosphate + phosphate + H(+). Catalyzes the dephosphorylation of undecaprenyl diphosphate (UPP). Confers resistance to bacitracin. The protein is Undecaprenyl-diphosphatase of Streptococcus agalactiae serotype III (strain NEM316).